We begin with the raw amino-acid sequence, 297 residues long: Aspartate carbamoyltransferase catalytic subunit (297 aa).

Positions 49 and 50 each coordinate carbamoyl phosphate. Residue Lys-77 participates in L-aspartate binding. Residues Arg-99, His-129, and Gln-132 each coordinate carbamoyl phosphate. Residues Arg-162 and Arg-215 each coordinate L-aspartate. Residues Gly-256 and Pro-257 each coordinate carbamoyl phosphate.

Belongs to the aspartate/ornithine carbamoyltransferase superfamily. ATCase family. Heterododecamer (2C3:3R2) of six catalytic PyrB chains organized as two trimers (C3), and six regulatory PyrI chains organized as three dimers (R2).

The catalysed reaction is carbamoyl phosphate + L-aspartate = N-carbamoyl-L-aspartate + phosphate + H(+). Its pathway is pyrimidine metabolism; UMP biosynthesis via de novo pathway; (S)-dihydroorotate from bicarbonate: step 2/3. Catalyzes the condensation of carbamoyl phosphate and aspartate to form carbamoyl aspartate and inorganic phosphate, the committed step in the de novo pyrimidine nucleotide biosynthesis pathway. This Legionella pneumophila (strain Corby) protein is Aspartate carbamoyltransferase catalytic subunit.